The primary structure comprises 339 residues: Ketol-acid reductoisomerase (NADP(+)) (339 aa).

In terms of domain architecture, KARI N-terminal Rossmann spans 1 to 182; the sequence is MRVYYDRDAD…GGGRSGIIET (182 aa). NADP(+) contacts are provided by residues 24-27, Arg-48, Ser-51, Ser-53, and 83-86; these read YGSQ and DELQ. Residue His-108 is part of the active site. Residue Gly-134 participates in NADP(+) binding. The KARI C-terminal knotted domain maps to 183 to 328; that stretch reads TFREECETDL…GRLRAMMPWI (146 aa). The Mg(2+) site is built by Asp-191, Glu-195, Glu-227, and Glu-231. Ser-252 contacts substrate.

Belongs to the ketol-acid reductoisomerase family. Requires Mg(2+) as cofactor.

It catalyses the reaction (2R)-2,3-dihydroxy-3-methylbutanoate + NADP(+) = (2S)-2-acetolactate + NADPH + H(+). It carries out the reaction (2R,3R)-2,3-dihydroxy-3-methylpentanoate + NADP(+) = (S)-2-ethyl-2-hydroxy-3-oxobutanoate + NADPH + H(+). The protein operates within amino-acid biosynthesis; L-isoleucine biosynthesis; L-isoleucine from 2-oxobutanoate: step 2/4. It functions in the pathway amino-acid biosynthesis; L-valine biosynthesis; L-valine from pyruvate: step 2/4. Involved in the biosynthesis of branched-chain amino acids (BCAA). Catalyzes an alkyl-migration followed by a ketol-acid reduction of (S)-2-acetolactate (S2AL) to yield (R)-2,3-dihydroxy-isovalerate. In the isomerase reaction, S2AL is rearranged via a Mg-dependent methyl migration to produce 3-hydroxy-3-methyl-2-ketobutyrate (HMKB). In the reductase reaction, this 2-ketoacid undergoes a metal-dependent reduction by NADPH to yield (R)-2,3-dihydroxy-isovalerate. In Rhodospirillum rubrum (strain ATCC 11170 / ATH 1.1.1 / DSM 467 / LMG 4362 / NCIMB 8255 / S1), this protein is Ketol-acid reductoisomerase (NADP(+)).